The primary structure comprises 258 residues: 4-oxalmesaconate hydratase (258 aa).

Residues histidine 28, aspartate 31, and histidine 141 each coordinate Zn(2+).

The protein belongs to the MshB deacetylase family. Requires Zn(2+) as cofactor.

The catalysed reaction is 2-hydroxy-4-oxobutane-1,2,4-tricarboxylate = 4-carboxy-2-hydroxy-cis,cis-muconate + H2O. Catalyzes the conversion of oxalomesaconic acid enol (OMAenol) to 4-carboxy-4-hydroxy-2-oxoadipic acid (CHA). Mediates the third step of gallate degradation pathway. This is 4-oxalmesaconate hydratase (galB) from Pseudomonas putida (strain ATCC 47054 / DSM 6125 / CFBP 8728 / NCIMB 11950 / KT2440).